The following is a 619-amino-acid chain: MEFPGGNDNYLTITGPSHPFLSGAETFHTPSLGDEEFEIPPISLDSDPSLAVSDVVGHFDDLADPSSSQDGSFSAQYGVQTLDMPVGMTHGLMEQGGGLLSGGLTMDLDHSIGTQYSANPPVTIDVPMTDMTSGLMGHSQLTTIDQSELSSQLGLSLGGGTILPPAQSPEDRLSTTPSPTSSLHEDGVEEFRRQPPSQKTVVVEAGKKQKAPKKRKKKDPNEPQKPVSAYALFFRDTQAAIKGQNPNATFGEVSKIVASMWDSLGEEQKQVYKRKTEAAKKEYLKALAAYKDNQECQATVETVDMDPAPPSQTPSPPPVAAADPASPAPASTEPPALSPSIVVNSTLSSYVANQASSGAGGQPNITKLIITKQMLPSSITMSQGGMVTVIPATVVTSRGLQLGQTSTATIQPSQQAQIVTRSVLQAAAAAAASMQLPPPRLQPPPLQQMPQPPTQQQVTILQQPPPLQAMQQPPPQKFRINLQQQPPPLQVKIVPPPTLKMQTTLVPPPVESSPEQPVNNSPETHTVEETTPETICEMITDVVPEVESPSQMDVELVSGSPMTLSPQPRCVRSGCENPPVVSKDWDNEYCSNECVVKHCRDVFLAWVASRNSNTVVFVK.

2 disordered regions span residues 153 to 227 and 304 to 337; these read LGLS…QKPV and DMDP…PPAL. Phosphothreonine is present on Thr-176. Residues Ser-178, Ser-181, and Ser-182 each carry the phosphoserine modification. Positions 183–193 are enriched in basic and acidic residues; sequence LHEDGVEEFRR. Basic residues predominate over residues 208-218; it reads KQKAPKKRKKK. The Nuclear localization signal signature appears at 213–218; it reads KKRKKK. The HMG box DNA-binding region spans 223-291; that stretch reads PQKPVSAYAL…EYLKALAAYK (69 aa). Residues 307-319 are compositionally biased toward pro residues; that stretch reads PAPPSQTPSPPPV. Thr-313 bears the Phosphothreonine mark. Ser-315 is subject to Phosphoserine. Residues 320-337 show a composition bias toward low complexity; that stretch reads AAADPASPAPASTEPPAL. An Asymmetric dimethylarginine modification is found at Arg-479. Residues 507–529 form a disordered region; that stretch reads PPPVESSPEQPVNNSPETHTVEE. Residues 512–524 are compositionally biased toward low complexity; sequence SSPEQPVNNSPET. Ser-548, Ser-550, Ser-558, Ser-560, and Ser-565 each carry phosphoserine.

In terms of assembly, component of the PNUTS-PP1 phosphatase complex, composed of PPP1R10/PNUTS, TOX4, WDR82 and PPP1CA or PPP1CB or PPP1CC. Interacts with PPP1R10/PNUTS. Interacts with FOXO1 and CREB1 (increased by cAMP); FOXO1 and CREB1 are required for full induction of TOX4-dependent activity and the interactions are inhibited by insulin.

The protein resides in the nucleus. The protein localises to the chromosome. Its activity is regulated as follows. In liver, recruited to target gene promoters following treatment with dexamethasone and cAMP. Binding is decreased in presence of insulin. Transcription factor that modulates cell fate reprogramming from the somatic state to the pluripotent and neuronal fate. In liver, controls the expression of hormone-regulated gluconeogenic genes such as G6PC1 and PCK1. This regulation is independent of the insulin receptor activation. Also acts as a regulatory component of protein phosphatase 1 (PP1) complexes. Component of the PNUTS-PP1 protein phosphatase complex, a PP1 complex that regulates RNA polymerase II transcription pause-release. PNUTS-PP1 also plays a role in the control of chromatin structure and cell cycle progression during the transition from mitosis into interphase. The protein is TOX high mobility group box family member 4 (TOX4) of Bos taurus (Bovine).